A 662-amino-acid polypeptide reads, in one-letter code: DCC-interacting protein 13-beta (662 aa).

Residues 1 to 428 are required for RAB5A binding; the sequence is MPAVDKLLLE…NSDIEDDNIV (428 aa). The BAR domain maps to 3 to 268; the sequence is AVDKLLLEEA…ESVYTPDIDV (266 aa). Residues 277–375 form the PH domain; the sequence is LIQKTGYLNL…WICAVNNISR (99 aa). The 150-residue stretch at 486 to 635 folds into the PID domain; the sequence is SLLQQMFIVR…LMLSVPLTND (150 aa). A disordered region spans residues 642 to 662; the sequence is NDQADDTGGSPSENRGAESEA.

In terms of assembly, homodimer. Homotetramer. Binds RAB5A/Rab5 through an N-terminal domain. This interaction is essential for its recruitment to endosomal membranes as well as its role in cell proliferation. Binds subunits of the NuRD/MeCP1 complex. Interacts with FSHR; interaction is independent of follicle stimulating hormone stimulation. Interacts with APPL1; the interaction is decreased by adiponectin in a time-dependent manner. Forms a complex comprising APPL1, RUVBL2, CTNNB1, HDAC1 and HDAC2; interaction reduces interaction between CTNNB1, HDAC1, HDAC2 and RUVBL2 leading to the decrease of deacetylase activity of this complex; affects the recruitment of repressive complexes to the Wnt target genes. Interacts (via BAR domain) with TBC1D1; interaction is dependent of TBC1D1 phosphorylation at 'Ser-235'; interaction diminishes the phosphorylation of TBC1D1 at 'Thr-596', resulting in inhibition of SLC2A4 translocation and glucose uptake. Interacts with ANXA2; targets APPL2 to endosomes and acting in parallel to RAB5A. Interacts with RAB31 (in GTP-bound form); interaction contributes to or enhances recruitment of APPL2 to the phagosomes; interaction enhances Fc-gamma receptor-mediated phagocytosis through PI3K/Akt signaling in macrophages. Interacts with PIK3R1; forms a complex with PIK3R1 and APPL1. Interacts (via BAR domain) with ADIPOR1; hinders the accessibility of APPL1 to ADIPOR1; negatively regulates adiponectin signaling; ADIPOQ dissociates this interaction and facilitates the recruitment of APPL1 to ADIPOR1. Interacts (via BAR domain) with ADIPOR2; ADIPOQ dissociates this interaction. Expressed in insulin-target tissues including skeletal muscle, liver, fat, and brain. Highly expressed in kidney and pancreas. Abundantly expressed in the ventromedial hypothalamus (VMH), barely detectable in the arcuate nucleus (ARC) and paraventricular nucleus (PVN) of the hypothalamus. Also expressed in pancreatic beta-cells.

It localises to the early endosome membrane. The protein resides in the nucleus. Its subcellular location is the cell membrane. It is found in the endosome membrane. The protein localises to the cytoplasm. It localises to the cytoplasmic vesicle. The protein resides in the phagosome. Its subcellular location is the cell projection. It is found in the ruffle. The protein localises to the ruffle membrane. It localises to the phagosome membrane. Functionally, multifunctional adapter protein that binds to various membrane receptors, nuclear factors and signaling proteins to regulate many processes, such as cell proliferation, immune response, endosomal trafficking and cell metabolism. Regulates signaling pathway leading to cell proliferation through interaction with RAB5A and subunits of the NuRD/MeCP1 complex. Plays a role in immune response by modulating phagocytosis, inflammatory and innate immune responses. In macrophages, enhances Fc-gamma receptor-mediated phagocytosis through interaction with RAB31 leading to activation of PI3K/Akt signaling. In response to LPS, modulates inflammatory responses by playing a key role on the regulation of TLR4 signaling and in the nuclear translocation of RELA/NF-kappa-B p65 and the secretion of pro- and anti-inflammatory cytokines. Also functions as a negative regulator of innate immune response via inhibition of AKT1 signaling pathway by forming a complex with APPL1 and PIK3R1. Plays a role in endosomal trafficking of TGFBR1 from the endosomes to the nucleus. Plays a role in cell metabolism by regulating adiponectin and insulin signaling pathways and adaptative thermogenesis. In muscle, negatively regulates adiponectin-simulated glucose uptake and fatty acid oxidation by inhibiting adiponectin signaling pathway through APPL1 sequestration thereby antagonizing APPL1 action. In muscles, negatively regulates insulin-induced plasma membrane recruitment of GLUT4 and glucose uptake through interaction with TBC1D1. Plays a role in cold and diet-induced adaptive thermogenesis by activating ventromedial hypothalamus (VMH) neurons throught AMPK inhibition which enhances sympathetic outflow to subcutaneous white adipose tissue (sWAT), sWAT beiging and cold tolerance. Also plays a role in other signaling pathways namely Wnt/beta-catenin, HGF and glucocorticoid receptor signaling. Positive regulator of beta-catenin/TCF-dependent transcription through direct interaction with RUVBL2/reptin resulting in the relief of RUVBL2-mediated repression of beta-catenin/TCF target genes by modulating the interactions within the beta-catenin-reptin-HDAC complex. May affect adult neurogenesis in hippocampus and olfactory system via regulating the sensitivity of glucocorticoid receptor. Required for fibroblast migration through HGF cell signaling. The sequence is that of DCC-interacting protein 13-beta from Mus musculus (Mouse).